Consider the following 291-residue polypeptide: N-acetylmannosamine kinase (291 aa).

ATP contacts are provided by residues 5–12 (AIDIGGTK) and 132–139 (GVGGGVVC). Residues H156, C166, C168, and C173 each contribute to the Zn(2+) site.

This sequence belongs to the ROK (NagC/XylR) family. NanK subfamily. As to quaternary structure, homodimer.

It catalyses the reaction an N-acyl-D-mannosamine + ATP = an N-acyl-D-mannosamine 6-phosphate + ADP + H(+). The protein operates within amino-sugar metabolism; N-acetylneuraminate degradation; D-fructose 6-phosphate from N-acetylneuraminate: step 2/5. In terms of biological role, catalyzes the phosphorylation of N-acetylmannosamine (ManNAc) to ManNAc-6-P. This Salmonella paratyphi A (strain ATCC 9150 / SARB42) protein is N-acetylmannosamine kinase.